The sequence spans 400 residues: Peptidase M20 domain-containing protein C757.05c (400 aa).

An N-terminal signal peptide occupies residues 1–25 (MTMKISVWSLLIVIGYHLWMSPVLA). Residue Asn80 is glycosylated (N-linked (GlcNAc...) asparagine). Residue Asp152 participates in Zn(2+) binding. Glu186 functions as the Proton acceptor in the catalytic mechanism. Zn(2+) is bound at residue Glu187.

The protein belongs to the peptidase M20A family. Zn(2+) is required as a cofactor.

It is found in the secreted. The polypeptide is Peptidase M20 domain-containing protein C757.05c (Schizosaccharomyces pombe (strain 972 / ATCC 24843) (Fission yeast)).